The primary structure comprises 282 residues: Bifunctional protein FolD (282 aa).

Residues 165–167 (NRS), Ser-190, and Ile-231 each bind NADP(+).

Belongs to the tetrahydrofolate dehydrogenase/cyclohydrolase family. In terms of assembly, homodimer.

It catalyses the reaction (6R)-5,10-methylene-5,6,7,8-tetrahydrofolate + NADP(+) = (6R)-5,10-methenyltetrahydrofolate + NADPH. It carries out the reaction (6R)-5,10-methenyltetrahydrofolate + H2O = (6R)-10-formyltetrahydrofolate + H(+). Its pathway is one-carbon metabolism; tetrahydrofolate interconversion. Its function is as follows. Catalyzes the oxidation of 5,10-methylenetetrahydrofolate to 5,10-methenyltetrahydrofolate and then the hydrolysis of 5,10-methenyltetrahydrofolate to 10-formyltetrahydrofolate. This is Bifunctional protein FolD from Clostridium botulinum (strain 657 / Type Ba4).